Consider the following 278-residue polypeptide: HTH-type transcriptional activator RhaS (278 aa).

An HTH araC/xylS-type domain is found at 174 to 272 (NHLIAWLEDH…GWSPREIRQG (99 aa)). 2 consecutive DNA-binding regions (H-T-H motif) follow at residues 191 to 212 (EAIA…KQHT) and 239 to 262 (VTHI…RREF).

Binds DNA as a dimer.

It is found in the cytoplasm. In terms of biological role, activates expression of the rhaBAD and rhaT operons. The sequence is that of HTH-type transcriptional activator RhaS from Escherichia fergusonii (strain ATCC 35469 / DSM 13698 / CCUG 18766 / IAM 14443 / JCM 21226 / LMG 7866 / NBRC 102419 / NCTC 12128 / CDC 0568-73).